The primary structure comprises 267 residues: Auxin-responsive protein IAA18 (267 aa).

Positions 42–46 (LELKL) match the EAR-like (transcriptional repression) motif. The tract at residues 81 to 101 (PSSTKTTSHKRTAPGPVVGWP) is disordered. The PB1 domain maps to 149–248 (GMFVKINMYG…SVKRLRVIKT (100 aa)).

It belongs to the Aux/IAA family. Homodimers and heterodimers. Interacts with TPL.

The protein resides in the nucleus. Its function is as follows. Aux/IAA proteins are short-lived transcriptional factors that function as repressors of early auxin response genes at low auxin concentrations. Repression is thought to result from the interaction with auxin response factors (ARFs), proteins that bind to the auxin-responsive promoter element (AuxRE). Formation of heterodimers with ARF proteins may alter their ability to modulate early auxin response genes expression. The protein is Auxin-responsive protein IAA18 (IAA18) of Arabidopsis thaliana (Mouse-ear cress).